We begin with the raw amino-acid sequence, 495 residues long: Probable aminotransferase ACS12 (495 aa).

An N6-(pyridoxal phosphate)lysine modification is found at lysine 334.

The protein belongs to the class-I pyridoxal-phosphate-dependent aminotransferase family. As to quaternary structure, homodimer. Requires pyridoxal 5'-phosphate as cofactor. In terms of tissue distribution, expressed in roots. Expressed at low level in leaves, stems, flowers and siliques.

Functionally, probable aminotransferase. Does not have 1-aminocyclopropane-1-carboxylate synthase (ACS) activity, suggesting that it is not involved in ethylene biosynthesis. This chain is Probable aminotransferase ACS12 (ACS12), found in Arabidopsis thaliana (Mouse-ear cress).